The chain runs to 394 residues: Monoterpene synthase FDS-5, chloroplastic (394 aa).

A chloroplast-targeting transit peptide spans 1-65 (MASFISLSSK…NLNSQFMQVY (65 aa)). Residues lysine 100, arginine 103, and glutamine 138 each coordinate isopentenyl diphosphate. 2 residues coordinate Mg(2+): aspartate 145 and aspartate 149. The short motif at 145 to 149 (DDMMD) is the DDXXD motif element. Position 154 (arginine 154) interacts with dimethylallyl diphosphate. An isopentenyl diphosphate-binding site is contributed by arginine 155. Dimethylallyl diphosphate-binding residues include lysine 242, glutamine 281, lysine 298, and lysine 307.

The protein belongs to the FPP/GGPP synthase family. Mg(2+) serves as cofactor. The cofactor is Mn(2+).

The protein localises to the plastid. It localises to the chloroplast. The catalysed reaction is isopentenyl diphosphate + dimethylallyl diphosphate = (2E)-geranyl diphosphate + diphosphate. It catalyses the reaction 2 dimethylallyl diphosphate = (R,R)-chrysanthemyl diphosphate + diphosphate. It carries out the reaction 2 dimethylallyl diphosphate = (R)-lavandulyl diphosphate + diphosphate. Condenses two molecules of dimethylallyl diphosphate (DMAPP) to produce mainly an irregular monoterpene, chrysanthemyl diphosphate (CPP) and lower amounts of a branched monoterpene, lavandulyl diphosphate (LPP). CPP is a precursor of the pyrethrin insecticides. When incubated with isopentenyl diphosphate (IPP) and DMAPP, catalyzes three competing isoprenoid condensation reactions, a chain elongation to give geranyl diphosphate (GPP), a cyclopropanation to give CPP and a branching to give LPP. The polypeptide is Monoterpene synthase FDS-5, chloroplastic (FDS-5) (Artemisia spiciformis (Spiked big sagebrush)).